The chain runs to 496 residues: Cytochrome P450 3A30 (496 aa).

Residue Cys-441 participates in heme binding.

This sequence belongs to the cytochrome P450 family. Heme is required as a cofactor. As to expression, highly expressed in liver and intestine. Moderate expression in gill and spleen. Low expression in kidney, brain and heart.

Its subcellular location is the endoplasmic reticulum membrane. It localises to the microsome membrane. The catalysed reaction is an organic molecule + reduced [NADPH--hemoprotein reductase] + O2 = an alcohol + oxidized [NADPH--hemoprotein reductase] + H2O + H(+). Functionally, putative steroid 6-beta-hydroxylase. This is Cytochrome P450 3A30 (cyp3a30) from Fundulus heteroclitus (Killifish).